A 435-amino-acid chain; its full sequence is GTPase Der (435 aa).

EngA-type G domains are found at residues 4-167 and 175-350; these read PTLA…PSED and IKFS…ENQT. GTP contacts are provided by residues 10–17, 57–61, 119–122, 181–188, 228–232, and 293–296; these read GRPNVGKS, DTGGI, NKVD, DTAGI, and NKWD. In terms of domain architecture, KH-like spans 351–435; the sequence is RRIQSSVLND…PIHIIARKRK (85 aa).

Belongs to the TRAFAC class TrmE-Era-EngA-EngB-Septin-like GTPase superfamily. EngA (Der) GTPase family. As to quaternary structure, associates with the 50S ribosomal subunit.

Its function is as follows. GTPase that plays an essential role in the late steps of ribosome biogenesis. This is GTPase Der from Lacticaseibacillus casei (strain BL23) (Lactobacillus casei).